The chain runs to 502 residues: Na(+)/H(+) antiporter NhaB (502 aa).

The next 11 helical transmembrane spans lie at 27–49, 66–86, 95–115, 128–148, 149–169, 241–261, 299–318, 350–370, 394–414, 450–470, and 477–497; these read AFLV…VLIL, PGGL…ESVF, VILL…LLLY, IVLS…LDAL, TVTA…HQFA, FFLQ…VTCI, IAAL…SLAL, FEEA…VAVI, MFFI…VATV, ATPN…APLI, and MVLM…IAVY.

This sequence belongs to the NhaB Na(+)/H(+) (TC 2.A.34) antiporter family.

The protein resides in the cell inner membrane. It catalyses the reaction 2 Na(+)(in) + 3 H(+)(out) = 2 Na(+)(out) + 3 H(+)(in). Functionally, na(+)/H(+) antiporter that extrudes sodium in exchange for external protons. This Teredinibacter turnerae (strain ATCC 39867 / T7901) protein is Na(+)/H(+) antiporter NhaB.